Reading from the N-terminus, the 96-residue chain is ATP synthase subunit c (96 aa).

The next 2 membrane-spanning stretches (helical) occupy residues 26 to 46 (GLVLFGAAIGMAIAAAGCGIG) and 68 to 88 (IMVTLILGLAFVESLAIYALV).

Belongs to the ATPase C chain family. As to quaternary structure, F-type ATPases have 2 components, F(1) - the catalytic core - and F(0) - the membrane proton channel. F(1) has five subunits: alpha(3), beta(3), gamma(1), delta(1), epsilon(1). F(0) has three main subunits: a(1), b(2) and c(10-14). The alpha and beta chains form an alternating ring which encloses part of the gamma chain. F(1) is attached to F(0) by a central stalk formed by the gamma and epsilon chains, while a peripheral stalk is formed by the delta and b chains.

The protein localises to the cell inner membrane. In terms of biological role, f(1)F(0) ATP synthase produces ATP from ADP in the presence of a proton or sodium gradient. F-type ATPases consist of two structural domains, F(1) containing the extramembraneous catalytic core and F(0) containing the membrane proton channel, linked together by a central stalk and a peripheral stalk. During catalysis, ATP synthesis in the catalytic domain of F(1) is coupled via a rotary mechanism of the central stalk subunits to proton translocation. Key component of the F(0) channel; it plays a direct role in translocation across the membrane. A homomeric c-ring of between 10-14 subunits forms the central stalk rotor element with the F(1) delta and epsilon subunits. The protein is ATP synthase subunit c of Oleidesulfovibrio alaskensis (strain ATCC BAA-1058 / DSM 17464 / G20) (Desulfovibrio alaskensis).